Consider the following 247-residue polypeptide: Myelin-oligodendrocyte glycoprotein (247 aa).

An N-terminal signal peptide occupies residues 1 to 29 (MASLSRPSLPSCLCSFLLLLLLQVSSSYA). The Extracellular portion of the chain corresponds to 30–154 (GQFRVIGPRH…EDPFYWVSPG (125 aa)). Positions 32-145 (FRVIGPRHPI…EEAAMELKVE (114 aa)) constitute an Ig-like V-type domain. Cys-53 and Cys-127 are disulfide-bonded. Asn-60 is a glycosylation site (N-linked (GlcNAc...) asparagine). The helical transmembrane segment at 155 to 175 (VLVLLAVLPVLLLQITVGLIF) threads the bilayer. The Cytoplasmic segment spans residues 176 to 210 (LCLQYRLRGKLRAEIENLHRTFDPHFLRVPCWKIT). Residues 211 to 231 (LFVIVPVLGPLVALIICYNWL) traverse the membrane as a helical segment. Residues 232–247 (HRRLAGQFLEELRNPF) are Extracellular-facing.

It belongs to the immunoglobulin superfamily. BTN/MOG family. In terms of assembly, homodimer. May form heterodimers between the different isoforms. (Microbial infection) Interacts with rubella virus E2 glycoprotein. Found exclusively in the CNS, where it is localized on the surface of myelin and oligodendrocyte cytoplasmic membranes.

The protein localises to the cell membrane. Functionally, mediates homophilic cell-cell adhesion. Minor component of the myelin sheath. May be involved in completion and/or maintenance of the myelin sheath and in cell-cell communication. In terms of biological role, (Microbial infection) Acts as a receptor for rubella virus. This chain is Myelin-oligodendrocyte glycoprotein (MOG), found in Homo sapiens (Human).